A 450-amino-acid chain; its full sequence is MIGPRLCAATPRFPLVSLAHRNSKVFALASSNAVAQRWGKRFYAPIETETPHKVGVEFEESKDRIFTSPQKYVQGRHAFTRSYMYVKKWATKSAVVLADQNVWNICANKIVDSLSQNGMTVTKLVFGGEASLVELDKLRKQCPDDTQVIIGVGGGKTMDSAKYIAHSMNLPSIICPTTASSDAATSSLSVIYTPDGQFQKYSFYPLNPNLIFIDTDVIVRAPVRFLISGIGDALSTWVETESVIRSNSTSFAGGVASIAGRYIARACKDTLEKYALSAILSNTRGVCTEAFENVVEANTLMSGLGFENGGLAAAHAIHNGMTAIHGPVHRLMHGEKVAYGTLVQVVLEDWPLEDFNNLASFMAKCHLPITLEELGIPNVTDEELLMVGRATLRPDESIHNMSKKFNPSQIADAIKAVDSYSQKWQEQTGWTERFRLPPSRHSPHLTDIHP.

NAD(+)-binding positions include Asp99, 155-159 (GKTMD), and 177-180 (TTAS). Asp182 is a substrate binding site. Ser186, Leu188, and Tyr192 together coordinate NAD(+). Residues Asp232, His315, and His333 each contribute to the substrate site. Zn(2+) is bound by residues Asp232, His315, and His333.

It belongs to the iron-containing alcohol dehydrogenase family. The cofactor is Zn(2+).

The protein resides in the mitochondrion. The enzyme catalyses glycerol + NAD(+) = dihydroxyacetone + NADH + H(+). It functions in the pathway polyol metabolism; glycerol fermentation; glycerone phosphate from glycerol (oxidative route): step 1/2. Glycerol dehydrogenase involved in the assimilation of glycerol. This chain is Glycerol dehydrogenase 1 (gld1), found in Schizosaccharomyces pombe (strain 972 / ATCC 24843) (Fission yeast).